The primary structure comprises 524 residues: Secologanin synthase 1 (524 aa).

Topologically, residues 1–11 (MEMDMDTIRKA) are lumenal. Residues 12 to 32 (IAATIFALVMAWAWRVLDWAW) traverse the membrane as a helical segment. Topologically, residues 33–524 (FTPKRIEKRL…SHVIYKKLES (492 aa)) are cytoplasmic. Cys-470 is a binding site for heme.

Belongs to the cytochrome P450 family. Requires heme as cofactor. In terms of tissue distribution, upper and lower leaf epidermis.

Its subcellular location is the endoplasmic reticulum membrane. The enzyme catalyses loganin + reduced [NADPH--hemoprotein reductase] + O2 = secologanin + oxidized [NADPH--hemoprotein reductase] + 2 H2O + H(+). It carries out the reaction secologanin + reduced [NADPH--hemoprotein reductase] + O2 = secoxyloganin + oxidized [NADPH--hemoprotein reductase] + H2O + 2 H(+). It participates in alkaloid biosynthesis; secologanin biosynthesis. Functionally, component of the seco-iridoid and derivatives monoterpenoid indole alkaloids (MIAs, e.g. secologanin) biosynthesis pathway. Catalyzes the conversion of loganin into secologanin. Catalyzes the conversion of secologanin into secoxyloganin. This Catharanthus roseus (Madagascar periwinkle) protein is Secologanin synthase 1.